We begin with the raw amino-acid sequence, 95 residues long: DNA/RNA-binding protein Alba (95 aa).

K13 carries the post-translational modification N6-acetyllysine.

It belongs to the histone-like Alba family. In terms of processing, acetylated. Acetylation at Lys-13 decreases DNA-binding affinity.

The protein localises to the cytoplasm. It localises to the chromosome. Its function is as follows. Binds double-stranded DNA tightly but without sequence specificity. Involved in DNA compaction. This is DNA/RNA-binding protein Alba from Nitrosopumilus maritimus (strain SCM1).